We begin with the raw amino-acid sequence, 161 residues long: Protein-lysine N-methyltransferase (161 aa).

The DxGxGxG SAM-binding motif signature appears at 34-40 (DLGCGDG).

The protein belongs to the class I-like SAM-binding methyltransferase superfamily. Monomer.

The enzyme catalyses L-lysyl-[protein] + S-adenosyl-L-methionine = N(6)-methyl-L-lysyl-[protein] + S-adenosyl-L-homocysteine + H(+). Catalyzes the methylation of lysine residues in target proteins, using S-adenosyl-L-methionine (SAM) as the methyl donor. Exhibits broad substrate specificity, being able to methylate the crenarchaeal chromatin protein Cren7 primarily at 'Lys-11', 'Lys-16' and 'Lys-31', as well as a number of recombinant Sulfolobus proteins in vitro. Methylates lysine residues in a rather sequence-independent manner. This is Protein-lysine N-methyltransferase from Saccharolobus islandicus (strain REY15A) (Sulfolobus islandicus).